We begin with the raw amino-acid sequence, 499 residues long: Glycerol kinase (499 aa).

Thr13 contacts ADP. ATP-binding residues include Thr13, Thr14, and Ser15. Thr13 serves as a coordination point for sn-glycerol 3-phosphate. An ADP-binding site is contributed by Arg17. Residues Arg83, Glu84, Tyr135, and Asp244 each coordinate sn-glycerol 3-phosphate. Positions 83, 84, 135, 244, and 245 each coordinate glycerol. Residues Thr266 and Gly310 each coordinate ADP. Positions 266, 310, 314, and 411 each coordinate ATP. Gly411 and Asn415 together coordinate ADP.

This sequence belongs to the FGGY kinase family.

It catalyses the reaction glycerol + ATP = sn-glycerol 3-phosphate + ADP + H(+). The protein operates within polyol metabolism; glycerol degradation via glycerol kinase pathway; sn-glycerol 3-phosphate from glycerol: step 1/1. Inhibited by fructose 1,6-bisphosphate (FBP). Key enzyme in the regulation of glycerol uptake and metabolism. Catalyzes the phosphorylation of glycerol to yield sn-glycerol 3-phosphate. The polypeptide is Glycerol kinase (Pseudothermotoga lettingae (strain ATCC BAA-301 / DSM 14385 / NBRC 107922 / TMO) (Thermotoga lettingae)).